Reading from the N-terminus, the 914-residue chain is MDNKTDNKNNLTPQSAPSSAPHKERLTPMMEQYIEIKAVNSDCLLFYRMGDFYELFFNDAIEAAQVLGITLTTRGKHLGEDIPMCGVPVHTADDYLQKLISCGYRVAVCEQTEDPAEAKKRGSKSIVRRDVVRLVTPGTLTEEKLLDPTRANYLMTLARIKTSDGEEFALSWIDISTGIFRVTESRLEKLLADIMRVDPQEIIVADSFFHDKSHKSLFNVLDCIVSPQHASLFDVITAERDICSYFKLSTLEGIADYSRPELSAIAAAIRYIEKTQITHRPPLMRPERQNESATLFIDAATRLSLELVRTTSGQRDGSLLKAIDRTVTGGGSRLLLDRLIAPLTTPSAIDKRLDSIAFFLRNTSLAEDIKLILKGGPDMPRAVSRLALGRGGPRDMASIQRGFEIIRELHQLLSNELLPQEISDVQQIFSHLPTALHLRLEQALADDLPLLKRDGGFIRPHYHKELDEMRTLRDESRRVIAELQAQYAQETDIKTLKIKHNNILGYFIEVTNLQATALTNTPQAKARFIHRQTMANAMRFTTTELAELESRIAHAANHALTLELEIFDTLVHEITEQVDFIRKAAESLAVLDVSVALAHLAEEQGYCRPKIDQSLTFCITAGRHPVVEQALRKQAAEPFVANNCDLSLQENHQYAAIWLLTGPNMGGKSTFLRQNALIAIMAQMGSFVPATSAHIGVVDRLFSRVGASDDLARGRSTFMMEMVETATILNHATQHSLVILDEIGRGTSTFDGLSIAWATVEYLHEVNHCRAILATHFHEMTALTEKLDRLHNVTMKVKNWDGDVIFLHEVTPGAADRSYGVQVAKLAGLPKAVITRATDVLQQLEQGEMAGKGHKLIDDLPLFSLKTTSSLNEDTNKYSMLHEAFKNIHPDELSPKQALEALYHLKQLEKNNPL.

The disordered stretch occupies residues 1-24; sequence MDNKTDNKNNLTPQSAPSSAPHKE. Residues 8-18 are compositionally biased toward polar residues; it reads KNNLTPQSAPS. 662–669 contributes to the ATP binding site; sequence GPNMGGKS.

This sequence belongs to the DNA mismatch repair MutS family.

In terms of biological role, this protein is involved in the repair of mismatches in DNA. It is possible that it carries out the mismatch recognition step. This protein has a weak ATPase activity. This is DNA mismatch repair protein MutS from Bartonella henselae (strain ATCC 49882 / DSM 28221 / CCUG 30454 / Houston 1) (Rochalimaea henselae).